Reading from the N-terminus, the 442-residue chain is tRNA modification GTPase MnmE (442 aa).

Residues R21, E79, and K118 each contribute to the (6S)-5-formyl-5,6,7,8-tetrahydrofolate site. The TrmE-type G domain maps to 215 to 365; that stretch reads GLKIAIVGKP…LENKLSSYCN (151 aa). Residues 225-230, 244-250, and 269-272 each bind GTP; these read NVGKSS, TNEAGTT, and DTAG. Positions 229 and 250 each coordinate Mg(2+). K442 is a (6S)-5-formyl-5,6,7,8-tetrahydrofolate binding site.

Belongs to the TRAFAC class TrmE-Era-EngA-EngB-Septin-like GTPase superfamily. TrmE GTPase family. Homodimer. Heterotetramer of two MnmE and two MnmG subunits. K(+) serves as cofactor.

Its subcellular location is the cytoplasm. Its function is as follows. Exhibits a very high intrinsic GTPase hydrolysis rate. Involved in the addition of a carboxymethylaminomethyl (cmnm) group at the wobble position (U34) of certain tRNAs, forming tRNA-cmnm(5)s(2)U34. This chain is tRNA modification GTPase MnmE, found in Mycoplasma mobile (strain ATCC 43663 / 163K / NCTC 11711) (Mesomycoplasma mobile).